A 408-amino-acid chain; its full sequence is S100P-binding protein (408 aa).

Disordered regions lie at residues 1 to 111 (MMCS…AETP), 162 to 234 (KDET…SENP), and 271 to 291 (VSTS…MKGH). Residues 28 to 59 (SLDEDGLDDSLLELSEGEEDDGDVNYTEEEID) show a composition bias toward acidic residues. Composition is skewed to basic and acidic residues over residues 77–86 (DGGHVEKGER) and 162–185 (KDET…REDG). Ser187 bears the Phosphoserine mark. A compositionally biased stretch (polar residues) spans 188–234 (PNESKLCTESEGISPNNSAWNGPQLSSSNNNFQQTVSDKNMPDSENP). Residues 280–291 (VLNKDSGKMKGH) are compositionally biased toward basic and acidic residues.

Interacts with S100P. Expressed in brain, spleen, and lung. Not detected in pancreas or liver. In pancreas, expressed predominantly in islet cells and to a lesser extent in acinar cells, but not expressed in ductal cells. Up-regulated in various pancreatic ductal adenocarcinomas and pancreatic intraepithelial neoplasias. Detected in pancreatic ductal adenocarcinoma cells (at protein level). Not detected in non-neoplastic ductal epithelium (at protein level).

It is found in the nucleus. In Homo sapiens (Human), this protein is S100P-binding protein.